Here is a 463-residue protein sequence, read N- to C-terminus: Probable diacyglycerol O-acyltransferase tgs1 (463 aa).

The residue at position 1 (M1) is an N-acetylmethionine. H137 functions as the Proton acceptor in the catalytic mechanism.

It belongs to the long-chain O-acyltransferase family.

It catalyses the reaction an acyl-CoA + a 1,2-diacyl-sn-glycerol = a triacyl-sn-glycerol + CoA. The catalysed reaction is di-(9Z)-octadecenoylglycerol + (9Z)-octadecenoyl-CoA = 1,2,3-tri-(9Z-octadecenoyl)-glycerol + CoA. It participates in glycerolipid metabolism; triacylglycerol biosynthesis. Its function is as follows. Catalyzes the terminal and only committed step in triacylglycerol synthesis by using diacylglycerol and fatty acyl CoA as substrates. Required for storage lipid synthesis. In terms of biological role, upon expression in E.coli functions as a triacylglycerol synthase, making triacylglycerol (TG) from diolein and long-chain fatty acyl-CoA. Prefers C(26:0)-CoA over C(18:1)-CoA. TG synthesis activity increases in M.tuberculosis upon oxygen depletion and NO treatment, with concomitant accumulation of TG in inclusion bodies. As disruption of the gene encoding this protein obviates TG synthesis this seems to be the major enzyme involved in production of TG. Has no wax synthase activity to produce wax esters. The sequence is that of Probable diacyglycerol O-acyltransferase tgs1 (tgs1) from Mycobacterium tuberculosis (strain ATCC 25618 / H37Rv).